The chain runs to 1377 residues: DNA-directed RNA polymerase subunit beta (1377 aa).

The protein belongs to the RNA polymerase beta chain family. The RNAP catalytic core consists of 2 alpha, 1 beta, 1 beta' and 1 omega subunit. When a sigma factor is associated with the core the holoenzyme is formed, which can initiate transcription.

It carries out the reaction RNA(n) + a ribonucleoside 5'-triphosphate = RNA(n+1) + diphosphate. In terms of biological role, DNA-dependent RNA polymerase catalyzes the transcription of DNA into RNA using the four ribonucleoside triphosphates as substrates. The chain is DNA-directed RNA polymerase subunit beta from Brucella canis (strain ATCC 23365 / NCTC 10854 / RM-666).